The sequence spans 341 residues: MEHNGSFRVDSEFRYTLFPIVYSVIFILGVVANGYVLWVFANLYPSKKLNEIKIFMVNLTMADLLFLITLPLWIVYYYNEGDWILPNFLCNVAGCLFFINTYCSVAFLGVITYNRYQAVAYPIKTAQATTRKRGISLSLIIWVSIVATASYFLATDSTNLVPNKDGSGNITRCFEHYEPYSVPILVVHVFIAFCFFLVFFLIFYCNLVIIHTLLTQPMRQQRKAGVKRRALWMVCTVLAVFIICFVPHHVVQLPWTLAELGYQTNFHQAINDAHQITLCLLSTNCVLDPVIYCFLTKKFRKHLSEKFYSMRSSRKCSRATSDTCTEVIVPANQTPIVSLKN.

Topologically, residues 1-16 (MEHNGSFRVDSEFRYT) are extracellular. Asn4 is a glycosylation site (N-linked (GlcNAc...) asparagine). The chain crosses the membrane as a helical span at residues 17–38 (LFPIVYSVIFILGVVANGYVLW). The Cytoplasmic portion of the chain corresponds to 39-54 (VFANLYPSKKLNEIKI). A helical transmembrane segment spans residues 55–74 (FMVNLTMADLLFLITLPLWI). The Extracellular portion of the chain corresponds to 75–91 (VYYYNEGDWILPNFLCN). The cysteines at positions 90 and 173 are disulfide-linked. A helical transmembrane segment spans residues 92–113 (VAGCLFFINTYCSVAFLGVITY). At 114-133 (NRYQAVAYPIKTAQATTRKR) the chain is on the cytoplasmic side. A helical transmembrane segment spans residues 134 to 155 (GISLSLIIWVSIVATASYFLAT). Residues 156 to 184 (DSTNLVPNKDGSGNITRCFEHYEPYSVPI) are Extracellular-facing. Asn169 carries N-linked (GlcNAc...) asparagine glycosylation. Residues 185–205 (LVVHVFIAFCFFLVFFLIFYC) traverse the membrane as a helical segment. The Cytoplasmic segment spans residues 206-233 (NLVIIHTLLTQPMRQQRKAGVKRRALWM). Residues 234-254 (VCTVLAVFIICFVPHHVVQLP) form a helical membrane-spanning segment. Residues 255–275 (WTLAELGYQTNFHQAINDAHQ) are Extracellular-facing. The chain crosses the membrane as a helical span at residues 276–295 (ITLCLLSTNCVLDPVIYCFL). Residues 296–341 (TKKFRKHLSEKFYSMRSSRKCSRATSDTCTEVIVPANQTPIVSLKN) are Cytoplasmic-facing.

The protein belongs to the G-protein coupled receptor 1 family. Interacts with ARRB1. Found in a range of organs. Expressed most strongly in spleen, followed by skeletal muscle, lung and small intestine. Expressed at moderate levels in the heart. Expressed at relatively low levels in the brain, liver and kidney.

The protein localises to the cell membrane. Receptor for platelet activating factor, a chemotactic phospholipid mediator that possesses potent inflammatory, smooth-muscle contractile and hypotensive activity. Seems to mediate its action via a G protein that activates a phosphatidylinositol-calcium second messenger system. This chain is Platelet-activating factor receptor (Ptafr), found in Mus musculus (Mouse).